Here is a 429-residue protein sequence, read N- to C-terminus: 4-hydroxyphenylacetate degradation bifunctional isomerase/decarboxylase (429 aa).

Approximate repeat units lie at residues 1-215 (MKGT…RKSF) and 216-429 (PTLP…ETAK). Glu276, Glu278, and Asp307 together coordinate a divalent metal cation.

It belongs to the FAH family. As to quaternary structure, monomer. Requires Mg(2+) as cofactor.

It catalyses the reaction (2E,4Z)-5-hydroxypenta-2,4-diene-1,2,5-tricarboxylate = (3E,5R)-5-carboxy-2-oxohept-3-enedioate. It carries out the reaction (3E,5R)-5-carboxy-2-oxohept-3-enedioate + H(+) = (4Z)-2-oxohept-4-enedioate + CO2. It participates in aromatic compound metabolism; 4-hydroxyphenylacetate degradation; pyruvate and succinate semialdehyde from 4-hydroxyphenylacetate: step 4/7. It functions in the pathway aromatic compound metabolism; 4-hydroxyphenylacetate degradation; pyruvate and succinate semialdehyde from 4-hydroxyphenylacetate: step 5/7. Decarboxylates OPET (5-oxo-pent-3-ene-1,2,5-tricarboxylic acid) into HHDD (2-hydroxy-hept-2,4-diene-1,7-dioate) and isomerizes it to OHED (2-oxo-hept-3-ene-1,7-dioate). The sequence is that of 4-hydroxyphenylacetate degradation bifunctional isomerase/decarboxylase (hpaG) from Escherichia coli.